Reading from the N-terminus, the 203-residue chain is CS5 fimbrial subunit (203 aa).

Positions Met-1 to Ala-22 are cleaved as a signal peptide.

Its subcellular location is the fimbrium. In terms of biological role, major subunit of fimbriae. Fimbriae (also called pili), are polar filaments radiating from the surface of the bacterium to a length of 0.5-1.5 micrometers and numbering 100-300 per cell. They enable bacteria to colonize the epithelium of specific host organs. This chain is CS5 fimbrial subunit, found in Escherichia coli.